Here is a 230-residue protein sequence, read N- to C-terminus: Large ribosomal subunit protein uL1 (230 aa).

It belongs to the universal ribosomal protein uL1 family. In terms of assembly, part of the 50S ribosomal subunit.

Its function is as follows. Binds directly to 23S rRNA. The L1 stalk is quite mobile in the ribosome, and is involved in E site tRNA release. Protein L1 is also a translational repressor protein, it controls the translation of the L11 operon by binding to its mRNA. In Bacillus cereus (strain G9842), this protein is Large ribosomal subunit protein uL1.